The chain runs to 611 residues: Developmental and secondary metabolism regulator veA (611 aa).

3 disordered regions span residues 1 to 57, 222 to 497, and 511 to 611; these read MNRK…RPVD, RRRE…ASFD, and LEAS…PGHA. Polar residues predominate over residues 14–23; the sequence is KSSATRTTND. The 193-residue stretch at 24 to 216 folds into the Velvet domain; sequence GRAITYEMQV…AEQGCRVRIR (193 aa). Residues 38 to 43 carry the Nuclear localization signal motif; that stretch reads QRARAC. Over residues 242–254 the composition is skewed to low complexity; that stretch reads AARARASATPDPS. The segment covering 274 to 290 has biased composition (polar residues); sequence SASNASHQSLGSISRRP. A compositionally biased stretch (low complexity) spans 330-340; sequence YPPNQFVQQQP. A compositionally biased stretch (pro residues) spans 341-361; sequence PMQPPLPQYQPPNYPAPPPPV. The span at 362 to 377 shows a compositional bias: low complexity; it reads TAAQQPQPAQSYYNYP. Polar residues predominate over residues 419-434; sequence RNSQQIPPTSQPTAYT. Composition is skewed to low complexity over residues 435-452 and 461-471; these read QPMQ…QHYQ and QASQHSSYSSM. The segment at 455-499 is PEST; it reads PPPPPSQASQHSSYSSMDLYNSRPAPIEPHHHGNTPASKASFDLP. A compositionally biased stretch (polar residues) spans 511–533; that stretch reads LEASSPTSVAPTNAYFSGGQTPI.

Belongs to the velvet family. VeA subfamily. Component of the heterotrimeric velvet complex composed of laeA, veA and velB; VeA acting as a bridging protein between laeA and velB.

The protein resides in the nucleus. It is found in the cytoplasm. Its function is as follows. Component of the velvet transcription factor complex that controls sexual/asexual developmental ratio in response to light, promoting sexual development in the darkness while stimulating asexual sporulation under illumination. The velvet complex hat acts as a global regulator for secondary metabolite gene expression. Controls the expression of the dothistromin gene cluster. Regulates hyphal growth and pigment formation. Acts as a positive regulator of virulence. This Dothistroma septosporum (strain NZE10 / CBS 128990) (Red band needle blight fungus) protein is Developmental and secondary metabolism regulator veA.